The following is a 142-amino-acid chain: Large ribosomal subunit protein uL13 (142 aa).

It belongs to the universal ribosomal protein uL13 family. Part of the 50S ribosomal subunit.

This protein is one of the early assembly proteins of the 50S ribosomal subunit, although it is not seen to bind rRNA by itself. It is important during the early stages of 50S assembly. The sequence is that of Large ribosomal subunit protein uL13 from Haemophilus influenzae (strain PittGG).